We begin with the raw amino-acid sequence, 100 residues long: MASSSMSSQSSGSWTAKQNKAFEQALATYDQDTPNRWQNVAKVVGGKTTEEVKRHYELLVQDINSIENGHVPFPNYRTSGGCTNGRLSQEEKRMRNMRLQ.

The 56-residue stretch at 9–64 folds into the SANT domain; the sequence is QSSGSWTAKQNKAFEQALATYDQDTPNRWQNVAKVVGGKTTEEVKRHYELLVQDIN. Residues 73–100 form a disordered region; the sequence is FPNYRTSGGCTNGRLSQEEKRMRNMRLQ. Residues 76 to 87 show a composition bias toward polar residues; it reads YRTSGGCTNGRL.

The protein localises to the nucleus. Its function is as follows. Probable transcription factor. The chain is Protein RADIALIS-like 1 (RL1) from Arabidopsis thaliana (Mouse-ear cress).